Here is a 158-residue protein sequence, read N- to C-terminus: 18.1 kDa class I heat shock protein (158 aa).

The region spanning 44-158 is the sHSP domain; the sequence is ENPAFVSTRV…AEVKSIEISG (115 aa).

Belongs to the small heat shock protein (HSP20) family. As to quaternary structure, forms oligomeric structures.

The protein resides in the cytoplasm. This is 18.1 kDa class I heat shock protein (HSP18.1) from Pisum sativum (Garden pea).